Consider the following 401-residue polypeptide: Probable aspartate/prephenate aminotransferase (401 aa).

G39, W125, and N175 together coordinate L-aspartate. Residue K239 is modified to N6-(pyridoxal phosphate)lysine. Residue R375 participates in L-aspartate binding.

The protein belongs to the class-I pyridoxal-phosphate-dependent aminotransferase family. As to quaternary structure, homodimer. Pyridoxal 5'-phosphate is required as a cofactor.

Its subcellular location is the cytoplasm. It carries out the reaction L-aspartate + 2-oxoglutarate = oxaloacetate + L-glutamate. The enzyme catalyses L-arogenate + 2-oxoglutarate = prephenate + L-glutamate. In terms of biological role, catalyzes the reversible conversion of aspartate and 2-oxoglutarate to glutamate and oxaloacetate. Can also transaminate prephenate in the presence of glutamate. This is Probable aspartate/prephenate aminotransferase (aatA) from Rickettsia conorii (strain ATCC VR-613 / Malish 7).